A 453-amino-acid polypeptide reads, in one-letter code: Allantoinase (453 aa).

Zn(2+)-binding residues include His-59, His-61, Lys-146, His-186, His-242, and Asp-315. Lys-146 is subject to N6-carboxylysine.

This sequence belongs to the metallo-dependent hydrolases superfamily. Allantoinase family. As to quaternary structure, homotetramer. It depends on Zn(2+) as a cofactor. In terms of processing, carboxylation allows a single lysine to coordinate two zinc ions.

It carries out the reaction (S)-allantoin + H2O = allantoate + H(+). Its pathway is nitrogen metabolism; (S)-allantoin degradation; allantoate from (S)-allantoin: step 1/1. Catalyzes the conversion of allantoin (5-ureidohydantoin) to allantoic acid by hydrolytic cleavage of the five-member hydantoin ring. This is Allantoinase from Escherichia coli O127:H6 (strain E2348/69 / EPEC).